The primary structure comprises 254 residues: Ribonuclease HII (254 aa).

An RNase H type-2 domain is found at 70 to 254 (QAIAGIDEVG…TFEPVKSMLG (185 aa)). A divalent metal cation-binding residues include D76, E77, and D168.

The protein belongs to the RNase HII family. Requires Mn(2+) as cofactor. Mg(2+) is required as a cofactor.

It localises to the cytoplasm. It carries out the reaction Endonucleolytic cleavage to 5'-phosphomonoester.. Endonuclease that specifically degrades the RNA of RNA-DNA hybrids. The sequence is that of Ribonuclease HII from Streptococcus gordonii (strain Challis / ATCC 35105 / BCRC 15272 / CH1 / DL1 / V288).